The following is a 520-amino-acid chain: FNIP repeat-containing protein DDB_G0274063/DDB_G0272642 (520 aa).

Disordered stretches follow at residues 47 to 86 and 100 to 121; these read QQQS…IDNR and NISS…SSSS. The segment covering 51–84 has biased composition (low complexity); sequence NNNNNNNNNNNNNNNNNNFINFSNHTNNINNNID. 4 FNIP repeats span residues 242–285, 286–331, 332–406, and 453–496; these read YNNN…FGES, FNQD…FGLS, YNQP…FGVQ, and FNQQ…FHNS.

The sequence is that of FNIP repeat-containing protein DDB_G0274063/DDB_G0272642 from Dictyostelium discoideum (Social amoeba).